The primary structure comprises 408 residues: LysM domain-containing protein ARB_01488 (408 aa).

The signal sequence occupies residues methionine 1–alanine 17. The LysM 1 domain occupies serine 42–alanine 91. The segment at serine 98–aspartate 178 is disordered. Residues aspartate 106–proline 116 are compositionally biased toward pro residues. 2 LysM domains span residues glutamine 270 to valine 320 and serine 360 to valine 406.

It is found in the secreted. Functionally, might have a role in sequestration of chitin oligosaccharides (breakdown products of fungal cell walls that are released during invasion and act as triggers of host immunity) to dampen host defense. This is LysM domain-containing protein ARB_01488 from Arthroderma benhamiae (strain ATCC MYA-4681 / CBS 112371) (Trichophyton mentagrophytes).